The following is a 356-amino-acid chain: GTPase Obg (356 aa).

The Obg domain occupies 1–159 (MKFLDEAKVY…RWIWLRMKLI (159 aa)). The OBG-type G domain occupies 160-327 (ADAGLVGLPN…ALRKLADVIS (168 aa)). Residues 166–173 (GLPNAGKS), 191–195 (FTTLH), 212–215 (DIPG), 279–282 (NKID), and 308–310 (SGA) contribute to the GTP site. Residues S173 and T193 each coordinate Mg(2+). The disordered stretch occupies residues 332–356 (SIKAKSTSDSAATEEPWAAPLPPQG).

The protein belongs to the TRAFAC class OBG-HflX-like GTPase superfamily. OBG GTPase family. Monomer. Mg(2+) is required as a cofactor.

It localises to the cytoplasm. In terms of biological role, an essential GTPase which binds GTP, GDP and possibly (p)ppGpp with moderate affinity, with high nucleotide exchange rates and a fairly low GTP hydrolysis rate. Plays a role in control of the cell cycle, stress response, ribosome biogenesis and in those bacteria that undergo differentiation, in morphogenesis control. The sequence is that of GTPase Obg from Bradyrhizobium sp. (strain BTAi1 / ATCC BAA-1182).